A 572-amino-acid chain; its full sequence is Methionine--tRNA ligase (572 aa).

Positions 11-21 (PYINGIKHLGN) match the 'HIGH' region motif. Residues cysteine 143, cysteine 146, cysteine 156, and cysteine 159 each contribute to the Zn(2+) site. The 'KMSKS' region motif lies at 346–350 (QFSTS). Residue threonine 349 participates in ATP binding.

The protein belongs to the class-I aminoacyl-tRNA synthetase family. MetG type 1 subfamily. In terms of assembly, monomer. Zn(2+) serves as cofactor.

The protein resides in the cytoplasm. The catalysed reaction is tRNA(Met) + L-methionine + ATP = L-methionyl-tRNA(Met) + AMP + diphosphate. Its function is as follows. Is required not only for elongation of protein synthesis but also for the initiation of all mRNA translation through initiator tRNA(fMet) aminoacylation. The chain is Methionine--tRNA ligase from Cereibacter sphaeroides (strain ATCC 17029 / ATH 2.4.9) (Rhodobacter sphaeroides).